Consider the following 144-residue polypeptide: Snaclec trimecetin subunit beta (144 aa).

Positions M1–A23 are cleaved as a signal peptide. Intrachain disulfides connect C25/C36, C53/C142, and C119/C134. The C-type lectin domain occupies F32–K143.

Belongs to the snaclec family. In terms of assembly, heterodimer of subunits alpha and beta; disulfide-linked. Expressed by the venom gland.

It is found in the secreted. Its function is as follows. Snaclec that induces platelet aggregation in either human platelet rich plasma (PRP) or washed platelet suspensions. It causes aggregation in a dose-dependent manner even in the absence of various platelet agonists such as ADP or von Willebrand factor (vWF). Interestingly, it does not induce aggregation in rabbit PRP. A monoclonal antibody against the platelet GPIb receptor blocks the aggregation induced by trimecetin, suggesting that it acts by binding to GPIb (GP1BA/GP1BB). The sequence is that of Snaclec trimecetin subunit beta from Protobothrops mucrosquamatus (Taiwan habu).